Here is a 417-residue protein sequence, read N- to C-terminus: Gamma-glutamyl phosphate reductase (417 aa).

This sequence belongs to the gamma-glutamyl phosphate reductase family.

The protein localises to the cytoplasm. It carries out the reaction L-glutamate 5-semialdehyde + phosphate + NADP(+) = L-glutamyl 5-phosphate + NADPH + H(+). Its pathway is amino-acid biosynthesis; L-proline biosynthesis; L-glutamate 5-semialdehyde from L-glutamate: step 2/2. In terms of biological role, catalyzes the NADPH-dependent reduction of L-glutamate 5-phosphate into L-glutamate 5-semialdehyde and phosphate. The product spontaneously undergoes cyclization to form 1-pyrroline-5-carboxylate. The polypeptide is Gamma-glutamyl phosphate reductase (Proteus mirabilis (strain HI4320)).